We begin with the raw amino-acid sequence, 334 residues long: Phosphate acyltransferase (334 aa).

It belongs to the PlsX family. In terms of assembly, homodimer. Probably interacts with PlsY.

It localises to the cytoplasm. It catalyses the reaction a fatty acyl-[ACP] + phosphate = an acyl phosphate + holo-[ACP]. It participates in lipid metabolism; phospholipid metabolism. Functionally, catalyzes the reversible formation of acyl-phosphate (acyl-PO(4)) from acyl-[acyl-carrier-protein] (acyl-ACP). This enzyme utilizes acyl-ACP as fatty acyl donor, but not acyl-CoA. This is Phosphate acyltransferase from Streptococcus thermophilus (strain ATCC BAA-491 / LMD-9).